The primary structure comprises 245 residues: 1-(5-phosphoribosyl)-5-[(5-phosphoribosylamino)methylideneamino] imidazole-4-carboxamide isomerase (245 aa).

Residue aspartate 7 is the Proton acceptor of the active site. The active-site Proton donor is the aspartate 129.

The protein belongs to the HisA/HisF family.

The protein resides in the cytoplasm. The catalysed reaction is 1-(5-phospho-beta-D-ribosyl)-5-[(5-phospho-beta-D-ribosylamino)methylideneamino]imidazole-4-carboxamide = 5-[(5-phospho-1-deoxy-D-ribulos-1-ylimino)methylamino]-1-(5-phospho-beta-D-ribosyl)imidazole-4-carboxamide. It participates in amino-acid biosynthesis; L-histidine biosynthesis; L-histidine from 5-phospho-alpha-D-ribose 1-diphosphate: step 4/9. The polypeptide is 1-(5-phosphoribosyl)-5-[(5-phosphoribosylamino)methylideneamino] imidazole-4-carboxamide isomerase (Serratia proteamaculans (strain 568)).